The chain runs to 523 residues: Sensory neuron membrane protein 1 (523 aa).

Residues 1 to 11 (MQLPRELKYAA) lie on the Cytoplasmic side of the membrane. A helical membrane pass occupies residues 12-32 (IAGGVALFGLIFGWVLFPTIL). Topologically, residues 33–458 (KSQLKKEMAL…HQLFIPKRVV (426 aa)) are extracellular. N-linked (GlcNAc...) asparagine glycosylation is found at Asn67 and Asn229. Disulfide bonds link Cys268/Cys333, Cys297/Cys352, and Cys335/Cys341. Asn440 carries N-linked (GlcNAc...) asparagine glycosylation. A helical membrane pass occupies residues 459–479 (GVLRWWMVSFGSLGAVIGIVF). Residues 480 to 523 (HFRDHIMRLAVSGDTKVSKVTPEEEEQKDISVIGQAQEPAKVNI) lie on the Cytoplasmic side of the membrane.

The protein belongs to the CD36 family.

The protein resides in the cell membrane. Plays an olfactory role that is not restricted to pheromone sensitivity. The sequence is that of Sensory neuron membrane protein 1 from Helicoverpa armigera (Cotton bollworm).